A 478-amino-acid chain; its full sequence is GDP-fucose protein O-fucosyltransferase 3 (478 aa).

Residues 1-8 (MVWIQRRR) lie on the Cytoplasmic side of the membrane. Residues 9–31 (LLASCLCITATVFLLVTLQVVVE) form a helical; Signal-anchor for type II membrane protein membrane-spanning segment. Topologically, residues 32-478 (LGKFERKKFK…QEFWALVFKD (447 aa)) are lumenal. N-linked (GlcNAc...) asparagine glycans are attached at residues N110 and N168. A disulfide bridge connects residues C389 and C392.

This sequence belongs to the glycosyltransferase 10 family.

The protein resides in the endoplasmic reticulum membrane. The catalysed reaction is L-threonyl-[protein] + GDP-beta-L-fucose = 3-O-(alpha-L-fucosyl)-L-threonyl-[protein] + GDP + H(+). It catalyses the reaction L-seryl-[protein] + GDP-beta-L-fucose = 3-O-(alpha-L-fucosyl)-L-seryl-[protein] + GDP + H(+). It functions in the pathway protein modification; protein glycosylation. Its function is as follows. Protein O-fucosyltransferase that specifically catalyzes O-fucosylation of serine or threonine residues in EMI domains of target proteins, such as MMRN1, MMRN2 and EMID1. Attaches fucose through an O-glycosidic linkage. O-fucosylation of EMI domain-containing proteins may be required for facilitating protein folding and secretion. May also show alpha-(1,3)-fucosyltransferase activity toward the innermost N-acetyl glucosamine (GlcNAc) residue in biantennary N-glycan acceptors. However, this was tested with a library of synthetic substrates and this activity is unsure in vivo. May be involved in biosynthesis of Lewis X-carrying biantennary N-glycans that regulate neuron stem cell self-renewal during brain development. This chain is GDP-fucose protein O-fucosyltransferase 3 (FUT10), found in Canis lupus familiaris (Dog).